The sequence spans 89 residues: Small ribosomal subunit protein uS19 (89 aa).

The protein belongs to the universal ribosomal protein uS19 family.

Protein S19 forms a complex with S13 that binds strongly to the 16S ribosomal RNA. In Vesicomyosocius okutanii subsp. Calyptogena okutanii (strain HA), this protein is Small ribosomal subunit protein uS19.